Here is a 614-residue protein sequence, read N- to C-terminus: Fem-3 mRNA-binding factor 1 (614 aa).

The span at 1-24 (MDQSKMRYTNQFRKTPQKPTSTEV) shows a compositional bias: polar residues. The disordered stretch occupies residues 1–34 (MDQSKMRYTNQFRKTPQKPTSTEVGNHHTPAHSP). Residues 160–564 (TRSNNVLPTW…KMIETLAHLR (405 aa)) enclose the PUM-HD domain. Pumilio repeat units lie at residues 185–223 (EVLD…QLFE), 224–263 (QVIG…NIKR), 269–305 (NFIS…KLVQ), 306–342 (ALPR…EFIV), 343–382 (DFVA…DLTS), 398–434 (SVTN…CIIE), 436–471 (CLMR…EMMD), and 483–519 (TGKD…RQTK). Positions 283 to 614 (FACRVIQSSL…NLRLMRTFSP (332 aa)) are binding to gld-3 isoform A.

As to quaternary structure, interacts (via C-terminus) with gld-3 isoform A in an RNA-independent manner. In terms of tissue distribution, expressed specifically in the germline (at protein level).

It is found in the cytoplasm. RNA-binding protein that binds to the consensus sequence 5'-UGUGCCAUA-3' in mRNA 3'-UTRs. Involved in the control of stem cells and sex determination in the C.elegans hermaphrodite germline. May also play a role in the hermaphrodite germline proliferation and oogenesis. Binds specifically to the regulatory region of fem-3 3'-UTR and mediates the sperm/oocyte switch. Negatively regulates gld-3 expression, possibly by directly binding to two sites within the 3'-UTR of gld-3 isoform b. In association with the cye-1/cdk-2 complex, negatively regulates gld-1 expression in the distal germline cells of the mitotic zone. By binding to the 3'-UTR, represses phosphatase lip-1 expression in the distal part of the germline mitotic zone. Suppresses germline tumor formation by preventing the dedifferentiation of secondary spermatocytes. The sequence is that of Fem-3 mRNA-binding factor 1 (fbf-1) from Caenorhabditis elegans.